Reading from the N-terminus, the 156-residue chain is Cyanate hydratase (156 aa).

Active-site residues include Arg96, Glu99, and Ser122.

Belongs to the cyanase family.

It catalyses the reaction cyanate + hydrogencarbonate + 3 H(+) = NH4(+) + 2 CO2. Catalyzes the reaction of cyanate with bicarbonate to produce ammonia and carbon dioxide. In Burkholderia vietnamiensis (strain G4 / LMG 22486) (Burkholderia cepacia (strain R1808)), this protein is Cyanate hydratase.